The chain runs to 515 residues: E3 ubiquitin-protein ligase RNF217 (515 aa).

Disordered stretches follow at residues 1–125 (MGEE…VLAQ) and 147–189 (PEAP…ADPL). Residues 10 to 22 (GSGGARASGGGSA) show a composition bias toward gly residues. Composition is skewed to low complexity over residues 39–49 (GPRAAASSSRP) and 147–157 (PEAPSAESPSP). Positions 158–178 (SESPPQAPLGPIPASPPPSFP) are enriched in pro residues. A compositionally biased stretch (low complexity) spans 179 to 189 (SSPLSLPADPL). The segment at 232–451 (MVLMCRVCLE…LSIFGCKYRY (220 aa)) is TRIAD supradomain. Residues Cys236, Cys239, Cys256, Cys259, Cys356, Cys359, His364, Cys369, Cys396, and Cys399 each coordinate Zn(2+). The RING-type 1 zinc-finger motif lies at 236–282 (CRVCLEDKPIKPLPCCKKAVCEECLKIYLSSQVQLGQVEIKCPVTEC). The IBR-type zinc-finger motif lies at 301-369 (IKYKYFLELG…HSPWHEGVNC (69 aa)). The RING-type 2; atypical zinc-finger motif lies at 396–425 (CPKCKIHIQRTEGCDHMTCSQCNTNFCYRC). Cys409 is an active-site residue. Cys414, Cys417, Cys422, Cys425, His438, and Cys447 together coordinate Zn(2+). The chain crosses the membrane as a helical span at residues 476–496 (LILVLGLALGAIAVVIGLFVF).

It belongs to the RBR family. RNF217 subfamily. As to quaternary structure, interacts with HAX1.

It is found in the membrane. The protein resides in the cytoplasm. It catalyses the reaction [E2 ubiquitin-conjugating enzyme]-S-ubiquitinyl-L-cysteine + [acceptor protein]-L-lysine = [E2 ubiquitin-conjugating enzyme]-L-cysteine + [acceptor protein]-N(6)-ubiquitinyl-L-lysine.. It functions in the pathway protein modification; protein ubiquitination. Functionally, E3 ubiquitin-protein ligase which accepts ubiquitin from E2 ubiquitin-conjugating enzymes in the form of a thioester and then directly transfers the ubiquitin to targeted substrates. Mediates the degradation of the iron exporter ferroportin/SLC40A1 and thus regulates iron homeostasis. The polypeptide is E3 ubiquitin-protein ligase RNF217 (Rnf217) (Mus musculus (Mouse)).